The chain runs to 109 residues: U4-lycotoxin-Ls1c (109 aa).

The N-terminal stretch at 1 to 22 is a signal peptide; the sequence is MKVLVLFSVLFLTLFSYSSTEA. Positions 23 to 44 are excised as a propeptide; sequence IDEFDSDAEDDMLSLMANEQVR. A knottin domain region spans residues 45 to 88; the sequence is AKACTPRLHDCSHDRHSCCRGELFKDVCYCFYPEGEDITEVCSC. Cystine bridges form between cysteine 48-cysteine 63, cysteine 55-cysteine 72, cysteine 62-cysteine 88, and cysteine 74-cysteine 86. The linear cationic cytotoxin domain stretch occupies residues 89 to 108; the sequence is QQPKSHKYIEKVVDKAKTVV.

It belongs to the neurotoxin 19 (CSTX) family. 05 (U4-Lctx) subfamily. In terms of tissue distribution, expressed by the venom gland.

The protein resides in the secreted. Enhances the high-affinity desensitization of human P2RX3 purinoceptors. The chain is U4-lycotoxin-Ls1c from Lycosa singoriensis (Wolf spider).